The sequence spans 451 residues: Trigger factor (451 aa).

Residues 165–250 (DDKLTIDFEG…LHQIQAREAL (86 aa)) enclose the PPIase FKBP-type domain.

Belongs to the FKBP-type PPIase family. Tig subfamily.

It localises to the cytoplasm. The catalysed reaction is [protein]-peptidylproline (omega=180) = [protein]-peptidylproline (omega=0). Its function is as follows. Involved in protein export. Acts as a chaperone by maintaining the newly synthesized protein in an open conformation. Functions as a peptidyl-prolyl cis-trans isomerase. This Helicobacter pylori (strain HPAG1) protein is Trigger factor.